An 848-amino-acid polypeptide reads, in one-letter code: Leucine--tRNA ligase (848 aa).

The short motif at 41–51 is the 'HIGH' region element; it reads PYPSGRIHMGH. Positions 619–623 match the 'KMSKS' region motif; the sequence is KMSKS. ATP is bound at residue Lys-622.

It belongs to the class-I aminoacyl-tRNA synthetase family.

It is found in the cytoplasm. The enzyme catalyses tRNA(Leu) + L-leucine + ATP = L-leucyl-tRNA(Leu) + AMP + diphosphate. The polypeptide is Leucine--tRNA ligase (Roseobacter denitrificans (strain ATCC 33942 / OCh 114) (Erythrobacter sp. (strain OCh 114))).